The chain runs to 126 residues: Large ribosomal subunit protein bL12 (126 aa).

This sequence belongs to the bacterial ribosomal protein bL12 family. As to quaternary structure, homodimer. Part of the ribosomal stalk of the 50S ribosomal subunit. Forms a multimeric L10(L12)X complex, where L10 forms an elongated spine to which 2 to 4 L12 dimers bind in a sequential fashion. Binds GTP-bound translation factors.

Its function is as follows. Forms part of the ribosomal stalk which helps the ribosome interact with GTP-bound translation factors. Is thus essential for accurate translation. The polypeptide is Large ribosomal subunit protein bL12 (Blochmanniella floridana).